Here is a 655-residue protein sequence, read N- to C-terminus: Macrolide export ATP-binding/permease protein MacB (655 aa).

One can recognise an ABC transporter domain in the interval 6 to 244; sequence IELRDVWREF…DALAGDEGPE (239 aa). 42-49 serves as a coordination point for ATP; the sequence is GASGSGKS. The disordered stretch occupies residues 225–252; it reads DQARPDAPPLDALAGDEGPEAPRPAPQP. The next 4 membrane-spanning stretches (helical) occupy residues 280–300, 527–547, 583–603, and 620–640; these read LTML…ALGA, LTLL…IGVM, VLVC…IGVL, and SMVL…FLPA.

It belongs to the ABC transporter superfamily. Macrolide exporter (TC 3.A.1.122) family. Homodimer.

The protein localises to the cell inner membrane. In terms of biological role, non-canonical ABC transporter that contains transmembrane domains (TMD), which form a pore in the inner membrane, and an ATP-binding domain (NBD), which is responsible for energy generation. Confers resistance against macrolides. The sequence is that of Macrolide export ATP-binding/permease protein MacB from Bordetella avium (strain 197N).